Reading from the N-terminus, the 161-residue chain is Ubiquitin-conjugating enzyme E2Q-like protein 1 (161 aa).

The region spanning 1-154 (MKELQDIARL…VKTHEKYGWV (154 aa)) is the UBC core domain. Cys-88 (glycyl thioester intermediate) is an active-site residue.

The protein belongs to the ubiquitin-conjugating enzyme family. Interacts with FBXW7.

It is found in the nucleus. The enzyme catalyses S-ubiquitinyl-[E1 ubiquitin-activating enzyme]-L-cysteine + [E2 ubiquitin-conjugating enzyme]-L-cysteine = [E1 ubiquitin-activating enzyme]-L-cysteine + S-ubiquitinyl-[E2 ubiquitin-conjugating enzyme]-L-cysteine.. It functions in the pathway protein modification; protein ubiquitination. Functionally, probable E2 ubiquitin-protein ligase that catalyzes the covalent attachment of ubiquitin to target proteins. May facilitate the monoubiquitination and degradation of MTOR and CCNE1 through interaction with FBXW7. The sequence is that of Ubiquitin-conjugating enzyme E2Q-like protein 1 (UBE2QL1) from Homo sapiens (Human).